The sequence spans 99 residues: DNA-binding protein Fis (99 aa).

The segment at residues 75–94 (QTRAAIMMGINRGTLRKKLK) is a DNA-binding region (H-T-H motif).

The protein belongs to the transcriptional regulatory Fis family. Homodimer.

In terms of biological role, activates ribosomal RNA transcription. Plays a direct role in upstream activation of rRNA promoters. This Tolumonas auensis (strain DSM 9187 / NBRC 110442 / TA 4) protein is DNA-binding protein Fis.